A 217-amino-acid chain; its full sequence is Probable transaldolase (217 aa).

Lys-83 serves as the catalytic Schiff-base intermediate with substrate.

The protein belongs to the transaldolase family. Type 3B subfamily.

The protein localises to the cytoplasm. It carries out the reaction D-sedoheptulose 7-phosphate + D-glyceraldehyde 3-phosphate = D-erythrose 4-phosphate + beta-D-fructose 6-phosphate. It participates in carbohydrate degradation; pentose phosphate pathway; D-glyceraldehyde 3-phosphate and beta-D-fructose 6-phosphate from D-ribose 5-phosphate and D-xylulose 5-phosphate (non-oxidative stage): step 2/3. In terms of biological role, transaldolase is important for the balance of metabolites in the pentose-phosphate pathway. The protein is Probable transaldolase of Hydrogenobaculum sp. (strain Y04AAS1).